The sequence spans 328 residues: uncharacterized protein (328 aa).

The signal sequence occupies residues 1–24 (MKSIKGLGKLLLASSILFSSSAFA).

Belongs to the bacterial solute-binding protein 7 family.

It localises to the periplasm. This is an uncharacterized protein from Haemophilus influenzae (strain ATCC 51907 / DSM 11121 / KW20 / Rd).